The following is a 488-amino-acid chain: Glutamyl-tRNA(Gln) amidotransferase subunit A (488 aa).

Residues Lys76 and Ser151 each act as charge relay system in the active site. Ser175 acts as the Acyl-ester intermediate in catalysis.

It belongs to the amidase family. GatA subfamily. In terms of assembly, heterotrimer of A, B and C subunits.

The catalysed reaction is L-glutamyl-tRNA(Gln) + L-glutamine + ATP + H2O = L-glutaminyl-tRNA(Gln) + L-glutamate + ADP + phosphate + H(+). Its function is as follows. Allows the formation of correctly charged Gln-tRNA(Gln) through the transamidation of misacylated Glu-tRNA(Gln) in organisms which lack glutaminyl-tRNA synthetase. The reaction takes place in the presence of glutamine and ATP through an activated gamma-phospho-Glu-tRNA(Gln). The protein is Glutamyl-tRNA(Gln) amidotransferase subunit A of Symbiobacterium thermophilum (strain DSM 24528 / JCM 14929 / IAM 14863 / T).